Consider the following 151-residue polypeptide: Deoxyuridine 5'-triphosphate nucleotidohydrolase (151 aa).

Residues 70–72, N83, and 87–89 contribute to the substrate site; these read RSG and VID.

It belongs to the dUTPase family. The cofactor is Mg(2+).

The catalysed reaction is dUTP + H2O = dUMP + diphosphate + H(+). Its pathway is pyrimidine metabolism; dUMP biosynthesis; dUMP from dCTP (dUTP route): step 2/2. This enzyme is involved in nucleotide metabolism: it produces dUMP, the immediate precursor of thymidine nucleotides and it decreases the intracellular concentration of dUTP so that uracil cannot be incorporated into DNA. This Desulfitobacterium hafniense (strain DSM 10664 / DCB-2) protein is Deoxyuridine 5'-triphosphate nucleotidohydrolase.